The following is a 475-amino-acid chain: Glycogen synthase (475 aa).

Lysine 15 contributes to the ADP-alpha-D-glucose binding site.

The protein belongs to the glycosyltransferase 1 family. Bacterial/plant glycogen synthase subfamily.

It catalyses the reaction [(1-&gt;4)-alpha-D-glucosyl](n) + ADP-alpha-D-glucose = [(1-&gt;4)-alpha-D-glucosyl](n+1) + ADP + H(+). It participates in glycan biosynthesis; glycogen biosynthesis. Functionally, synthesizes alpha-1,4-glucan chains using ADP-glucose. This chain is Glycogen synthase, found in Chlamydia abortus (strain DSM 27085 / S26/3) (Chlamydophila abortus).